The chain runs to 489 residues: MTITPEQLIAMLPLLVVILTVVVVMLSIAWRRDHFTIATLTATGFIIALGSLYYVNALGVVDVTTLYHVDGYSSFFTALTIIAGLGTVAFAYPWLEGYQDNKEEFYMLVAIAVIGGILLSSAHHLASMFIGIELLTLPLFGLIGYAFQQRPSLEASIKYMLLSAAASSFLLFGMALLYAEAGNLSFTAMGQSLSDSNIHKPLVLAGLGMMLVGIGFKLSLFPFQLWTPDVYQGAPAPTGAFLATASKIGIFAVVMRLFLEAPAADSETLRMILGFMAIASILFGNIMALTQKNVKRLLGYSSVSHLGYLLVALIVLQYSPILAQETAEIYLAGYLFASLGAFGAIAVASSPYNKGELESLEDYRGLFWRRPVAAVVMSLMMLSLAGVPITLGFIGKLYVILAGIDSSLWWLTGMVVLGSAIGLFYYLRAAAIVFLRKPDNDNAPAVTTTSQNMATLITLVCAIIVIVLGVWPQPLIELTRFAIIAPAIN.

14 consecutive transmembrane segments (helical) span residues 8–28 (LIAM…MLSI), 35–55 (FTIA…LYYV), 75–95 (FFTA…YPWL), 105–125 (FYML…AHHL), 127–147 (SMFI…GYAF), 159–179 (YMLL…LLYA), 203–223 (VLAG…LFPF), 235–255 (PAPT…AVVM), 271–291 (MILG…ALTQ), 303–323 (VSHL…PILA), 329–349 (IYLA…AVAS), 374–394 (AVVM…LGFI), 407–427 (SLWW…FYYL), and 456–476 (LITL…QPLI).

It belongs to the complex I subunit 2 family. As to quaternary structure, NDH-1 is composed of 13 different subunits. Subunits NuoA, H, J, K, L, M, N constitute the membrane sector of the complex.

The protein localises to the cell inner membrane. The enzyme catalyses a quinone + NADH + 5 H(+)(in) = a quinol + NAD(+) + 4 H(+)(out). In terms of biological role, NDH-1 shuttles electrons from NADH, via FMN and iron-sulfur (Fe-S) centers, to quinones in the respiratory chain. The immediate electron acceptor for the enzyme in this species is believed to be ubiquinone. Couples the redox reaction to proton translocation (for every two electrons transferred, four hydrogen ions are translocated across the cytoplasmic membrane), and thus conserves the redox energy in a proton gradient. In Proteus mirabilis (strain HI4320), this protein is NADH-quinone oxidoreductase subunit N.